Reading from the N-terminus, the 858-residue chain is Conidiophore development regulator abaA (858 aa).

The segment at 1–22 is disordered; the sequence is MSSSLYHPRPVLSSQRYTPSPD. Residues 128-221 constitute a DNA-binding region (TEA); that stretch reads QKDKGGVWRR…QVVKKFFEDL (94 aa). The segment covering 500–522 has biased composition (basic and acidic residues); the sequence is VEHQRKKEKRTKGDDRKNLDRAG. 2 disordered regions span residues 500–535 and 792–858; these read VEHQ…GDAA and TGAG…AGGW. The Nuclear localization signal signature appears at 514–521; the sequence is DRKNLDRA. The segment covering 809–822 has biased composition (polar residues); the sequence is SSDQTALWTQSQWA.

This sequence belongs to the TEC1 family.

It localises to the nucleus. AbaA and wetA are pivotal regulators of conidiophore development and conidium maturation. They act individually and together to regulate their own expression and that of numerous other sporulation-specific genes. Binds to the sequence 5'-CATTCY-3', where Y is a pyrimidine, making both major- and minor-groove contacts. Plays a pivotal role in conidiation by regulating cell cycle pathways and other conidiation-related genes. The chain is Conidiophore development regulator abaA from Gibberella zeae (strain ATCC MYA-4620 / CBS 123657 / FGSC 9075 / NRRL 31084 / PH-1) (Wheat head blight fungus).